We begin with the raw amino-acid sequence, 241 residues long: Pyridoxine 5'-phosphate synthase (241 aa).

Residue Asn7 coordinates 3-amino-2-oxopropyl phosphate. 9 to 10 (DH) provides a ligand contact to 1-deoxy-D-xylulose 5-phosphate. Arg18 contacts 3-amino-2-oxopropyl phosphate. His43 functions as the Proton acceptor in the catalytic mechanism. The 1-deoxy-D-xylulose 5-phosphate site is built by Arg45 and His50. Residue Glu70 is the Proton acceptor of the active site. Thr100 is a 1-deoxy-D-xylulose 5-phosphate binding site. Catalysis depends on His191, which acts as the Proton donor. Residues Gly192 and 213 to 214 (GH) contribute to the 3-amino-2-oxopropyl phosphate site.

It belongs to the PNP synthase family. In terms of assembly, homooctamer; tetramer of dimers.

The protein resides in the cytoplasm. It carries out the reaction 3-amino-2-oxopropyl phosphate + 1-deoxy-D-xylulose 5-phosphate = pyridoxine 5'-phosphate + phosphate + 2 H2O + H(+). It functions in the pathway cofactor biosynthesis; pyridoxine 5'-phosphate biosynthesis; pyridoxine 5'-phosphate from D-erythrose 4-phosphate: step 5/5. Catalyzes the complicated ring closure reaction between the two acyclic compounds 1-deoxy-D-xylulose-5-phosphate (DXP) and 3-amino-2-oxopropyl phosphate (1-amino-acetone-3-phosphate or AAP) to form pyridoxine 5'-phosphate (PNP) and inorganic phosphate. The sequence is that of Pyridoxine 5'-phosphate synthase from Nostoc punctiforme (strain ATCC 29133 / PCC 73102).